A 333-amino-acid chain; its full sequence is Procathepsin L (333 aa).

A signal peptide spans 1-17; that stretch reads MNPTFILAALCLGIASA. A propeptide spans 18–113 (activation peptide); the sequence is TLTFNHSLEA…KVFQEPLFYE (96 aa). Glutamate 122 contacts Zn(2+). 2 disulfides stabilise this stretch: cysteine 135–cysteine 178 and cysteine 169–cysteine 211. Residue cysteine 138 is part of the active site. Zn(2+)-binding residues include glutamate 163, aspartate 184, glutamate 199, glutamate 205, glutamate 209, aspartate 227, aspartate 250, histidine 253, aspartate 273, and aspartate 275. An intrachain disulfide couples cysteine 269 to cysteine 322. Histidine 276 is an active-site residue. The propeptide occupies 289–291; sequence ESD. The active site involves asparagine 300.

The protein belongs to the peptidase C1 family. As to quaternary structure, dimer of a heavy and a light chain linked by disulfide bonds. Interacts with Long isoform of CD74/Ii chain; the interaction stabilizes the conformation of mature CTSL. During export along the endocytic pathway, pro-CTSL undergoes several proteolytic cleavages to generate the CTSL single-chain and two-chain mature forms, composed of a heavy chain linked to a light chain by disulfide bonds. Autocleavage; produces the single-chain CTSL after cleavage of the propeptide. The cleavage can be intermolecular.

The protein localises to the lysosome. It is found in the apical cell membrane. The protein resides in the cytoplasmic vesicle. Its subcellular location is the secretory vesicle. It localises to the chromaffin granule. The protein localises to the secreted. It is found in the extracellular space. The enzyme catalyses Specificity close to that of papain. As compared to cathepsin B, cathepsin L exhibits higher activity toward protein substrates, but has little activity on Z-Arg-Arg-NHMec, and no peptidyl-dipeptidase activity.. With respect to regulation, inhibited by the propeptide produced by autocleavage. Long isoform of CD74/Ii chain stabilizes the conformation of mature CTSL by binding to its active site and serving as a chaperone to help maintain a pool of mature enzyme in endocytic compartments and extracellular space of APCs. IFNG enhances the conversion into the CTSL mature and active form. Inhibited by CST6. Inhibited by the glycopeptide antibiotic teicoplanin. Inhibited by amantadine. In terms of biological role, thiol protease important for the overall degradation of proteins in lysosomes. Plays a critical for normal cellular functions such as general protein turnover, antigen processing and bone remodeling. Involved in the solubilization of cross-linked TG/thyroglobulin and in the subsequent release of thyroid hormone thyroxine (T4) by limited proteolysis of TG/thyroglobulin in the thyroid follicle lumen. In neuroendocrine chromaffin cells secretory vesicles, catalyzes the prohormone proenkephalin processing to the active enkephalin peptide neurotransmitter. In thymus, regulates CD4(+) T cell positive selection by generating the major histocompatibility complex class II (MHCII) bound peptide ligands presented by cortical thymic epithelial cells. Also mediates invariant chain processing in cortical thymic epithelial cells. Major elastin-degrading enzyme at neutral pH. Accumulates as a mature and active enzyme in the extracellular space of antigen presenting cells (APCs) to regulate degradation of the extracellular matrix in the course of inflammation. Secreted form generates endostatin from COL18A1. Critical for cardiac morphology and function. Plays an important role in hair follicle morphogenesis and cycling, as well as epidermal differentiation. Required for maximal stimulation of steroidogenesis by TIMP1. This chain is Procathepsin L (CTSL), found in Chlorocebus aethiops (Green monkey).